A 420-amino-acid polypeptide reads, in one-letter code: Cytochrome c biogenesis protein Ccs1 (420 aa).

3 consecutive transmembrane segments (helical) span residues 12–32 (LRFSIFLLLLISFCSIVGTVI), 71–91 (TWWFFALIFLFGLSLILCTFL), and 157–177 (IAPILVHLSMILILVGTIVGS).

The protein belongs to the Ccs1/CcsB family. As to quaternary structure, may interact with CcsA.

The protein localises to the plastid. It is found in the chloroplast thylakoid membrane. Required during biogenesis of c-type cytochromes (cytochrome c6 and cytochrome f) at the step of heme attachment. This Phaeodactylum tricornutum (strain CCAP 1055/1) protein is Cytochrome c biogenesis protein Ccs1.